Reading from the N-terminus, the 249-residue chain is Segregation and condensation protein A (249 aa).

Belongs to the ScpA family. Component of a cohesin-like complex composed of ScpA, ScpB and the Smc homodimer, in which ScpA and ScpB bind to the head domain of Smc. The presence of the three proteins is required for the association of the complex with DNA.

Its subcellular location is the cytoplasm. Functionally, participates in chromosomal partition during cell division. May act via the formation of a condensin-like complex containing Smc and ScpB that pull DNA away from mid-cell into both cell halves. In Listeria monocytogenes serotype 4a (strain HCC23), this protein is Segregation and condensation protein A.